Reading from the N-terminus, the 169-residue chain is Transcription antitermination protein NusB (169 aa).

Residues 150 to 169 are disordered; that stretch reads AAATSRRTETAGGESNDAGS.

The protein belongs to the NusB family.

Functionally, involved in transcription antitermination. Required for transcription of ribosomal RNA (rRNA) genes. Binds specifically to the boxA antiterminator sequence of the ribosomal RNA (rrn) operons. The protein is Transcription antitermination protein NusB of Rhodococcus jostii (strain RHA1).